Reading from the N-terminus, the 241-residue chain is MATNAKPVYKRILLKLSGEALQGSEGFGIDASILDRMAQEIKELVELGIQVGVVIGGGNLFRGAGLAKAGMNRVVGDHMGMLATVMNGLAMRDALHRAYVNARLMSAIPLNGVCDNYSWAEAISLLRNNRVVILSAGTGNPFFTTDSAACLRGIEIEADVVLKATKVDGVFTADPAKDPSATMYDQLTYSEVLEKELKVMDLAAFTLARDHKLPIRVFNMNKPGALRRVVMGEKEGTLITE.

15–18 provides a ligand contact to ATP; sequence KLSG. The segment at 23 to 28 is involved in allosteric activation by GTP; it reads GSEGFG. Gly57 is a UMP binding site. The ATP site is built by Gly58 and Arg62. UMP contacts are provided by residues Asp77 and 138-145; that span reads TGNPFFTT. Residues Thr165, Phe171, and Asp174 each contribute to the ATP site.

Belongs to the UMP kinase family. In terms of assembly, homohexamer.

It is found in the cytoplasm. The enzyme catalyses UMP + ATP = UDP + ADP. Its pathway is pyrimidine metabolism; CTP biosynthesis via de novo pathway; UDP from UMP (UMPK route): step 1/1. Its activity is regulated as follows. Allosterically activated by GTP. Inhibited by UTP. In terms of biological role, catalyzes the reversible phosphorylation of UMP to UDP. This is Uridylate kinase from Klebsiella pneumoniae subsp. pneumoniae (strain ATCC 700721 / MGH 78578).